A 417-amino-acid polypeptide reads, in one-letter code: RH-like protein ID (417 aa).

11 helical membrane passes run cysteine 12 to threonine 32, leucine 44 to phenylalanine 64, valine 77 to phenylalanine 97, isoleucine 125 to valine 145, isoleucine 172 to alanine 192, threonine 203 to phenylalanine 223, valine 238 to leucine 258, isoleucine 265 to cysteine 285, leucine 287 to glycine 307, asparagine 331 to threonine 351, and methionine 358 to leucine 378.

It belongs to the ammonium transporter (TC 2.A.49) family. Rh subfamily.

It is found in the membrane. Its function is as follows. May be part of an oligomeric complex which is likely to have a transport or channel function in the erythrocyte membrane. The polypeptide is RH-like protein ID (Gorilla gorilla gorilla (Western lowland gorilla)).